Reading from the N-terminus, the 173-residue chain is Cyclic pyranopterin monophosphate synthase (173 aa).

Substrate is bound by residues 75–77 (MCH) and 117–118 (ME). Aspartate 132 is a catalytic residue. The segment at 152-173 (SGGKSGHYQRENSSVGGFANEQ) is disordered. Over residues 162-173 (ENSSVGGFANEQ) the composition is skewed to polar residues.

Belongs to the MoaC family. Homohexamer; trimer of dimers.

It catalyses the reaction (8S)-3',8-cyclo-7,8-dihydroguanosine 5'-triphosphate = cyclic pyranopterin phosphate + diphosphate. It functions in the pathway cofactor biosynthesis; molybdopterin biosynthesis. Functionally, catalyzes the conversion of (8S)-3',8-cyclo-7,8-dihydroguanosine 5'-triphosphate to cyclic pyranopterin monophosphate (cPMP). This chain is Cyclic pyranopterin monophosphate synthase, found in Geobacillus sp. (strain WCH70).